We begin with the raw amino-acid sequence, 147 residues long: Insertion element IS402 uncharacterized 16.2 kDa protein (147 aa).

Positions 106-147 are disordered; it reads DSSSIRAVGAGQKLGQTPPIARDPVPSTTSSPTPTVRRSPRS. Residues 129-147 are compositionally biased toward low complexity; sequence PVPSTTSSPTPTVRRSPRS.

This sequence belongs to the transposase 6 family.

This is Insertion element IS402 uncharacterized 16.2 kDa protein from Burkholderia cepacia (Pseudomonas cepacia).